We begin with the raw amino-acid sequence, 94 residues long: Small ribosomal subunit protein uS19 (94 aa).

This sequence belongs to the universal ribosomal protein uS19 family.

In terms of biological role, protein S19 forms a complex with S13 that binds strongly to the 16S ribosomal RNA. This Caldicellulosiruptor saccharolyticus (strain ATCC 43494 / DSM 8903 / Tp8T 6331) protein is Small ribosomal subunit protein uS19.